The sequence spans 309 residues: Ribonuclease Z (309 aa).

Residues histidine 63, histidine 65, aspartate 67, histidine 68, histidine 145, aspartate 216, and histidine 274 each contribute to the Zn(2+) site. Catalysis depends on aspartate 67, which acts as the Proton acceptor.

Belongs to the RNase Z family. Homodimer. The cofactor is Zn(2+).

It carries out the reaction Endonucleolytic cleavage of RNA, removing extra 3' nucleotides from tRNA precursor, generating 3' termini of tRNAs. A 3'-hydroxy group is left at the tRNA terminus and a 5'-phosphoryl group is left at the trailer molecule.. Functionally, zinc phosphodiesterase, which displays some tRNA 3'-processing endonuclease activity. Probably involved in tRNA maturation, by removing a 3'-trailer from precursor tRNA. This is Ribonuclease Z from Streptococcus suis (strain 98HAH33).